We begin with the raw amino-acid sequence, 445 residues long: Protein phosphatase 2C 53 (445 aa).

A PPM-type phosphatase domain is found at 124–435 (LWGLESICGR…DNITVVVIDL (312 aa)). Asp-180, Gly-181, Asp-362, and Asp-426 together coordinate Mn(2+).

It belongs to the PP2C family. As to quaternary structure, interacts with PYL10, SAPK8 and SAPK10. Binding to PYL10 is dependent on the presence of abscisic acid (ABA). Interacts with PYL3, PYL5, PYL9 and PYL10. Binding to PYL9 and PYL10 is dependent on the presence of ABA. It depends on Mg(2+) as a cofactor. Requires Mn(2+) as cofactor. As to expression, expressed in leaf blades, leaf sheaths and lamina joints. Expressed at low levels in roots, stems, flowers and panicles.

It localises to the cytoplasm. Its subcellular location is the cytosol. The protein resides in the nucleus. It catalyses the reaction O-phospho-L-seryl-[protein] + H2O = L-seryl-[protein] + phosphate. It carries out the reaction O-phospho-L-threonyl-[protein] + H2O = L-threonyl-[protein] + phosphate. With respect to regulation, repressed by abscisic acid-bound PYL1. In terms of biological role, protein phosphatase that acts as a negative regulator of abscisic acid (ABA) signaling. Involved in the regulation of root architecture development and drought resistance. Can dephosphorylate SAPK8 and SAPK10 in vitro. Together with PYL10, SAPK8 and SAPK10, may form an ABA signaling module involved in stress response. The polypeptide is Protein phosphatase 2C 53 (Oryza sativa subsp. japonica (Rice)).